Reading from the N-terminus, the 354-residue chain is Guanine nucleotide-binding protein alpha-12 subunit (354 aa).

Residues 31–354 (QPLKLLLLGS…SLLMNVAEIL (324 aa)) enclose the G-alpha domain. The G1 motif stretch occupies residues 34 to 47 (KLLLLGSGECGKST). GTP-binding positions include 39–46 (GSGECGKS), 178–184 (LRVRVKT), 203–207 (DVGGQ), 272–275 (NKID), and Ala329. Mg(2+) is bound by residues Ser46 and Thr184. The G2 motif stretch occupies residues 176 to 184 (DFLRVRVKT). The interval 199-208 (FKLVDVGGQK) is G3 motif. A G4 motif region spans residues 268–275 (VLFFNKID). The G5 motif stretch occupies residues 327 to 332 (TCALDS).

Belongs to the G-alpha family. G proteins are composed of 3 units; alpha, beta and gamma. The alpha chain contains the guanine nucleotide binding site.

Functionally, guanine nucleotide-binding proteins (G proteins) are involved as modulators or transducers in various transmembrane signaling systems. The polypeptide is Guanine nucleotide-binding protein alpha-12 subunit (gpaL) (Dictyostelium discoideum (Social amoeba)).